The chain runs to 276 residues: Diaminopimelate epimerase (276 aa).

Residues asparagine 13, glutamine 46, and asparagine 66 each contribute to the substrate site. Cysteine 75 (proton donor) is an active-site residue. Substrate-binding positions include 76-77 (GN), asparagine 159, asparagine 192, and 210-211 (ER). Residue cysteine 219 is the Proton acceptor of the active site. Position 220–221 (220–221 (GS)) interacts with substrate.

It belongs to the diaminopimelate epimerase family. Homodimer.

It localises to the cytoplasm. It carries out the reaction (2S,6S)-2,6-diaminopimelate = meso-2,6-diaminopimelate. It participates in amino-acid biosynthesis; L-lysine biosynthesis via DAP pathway; DL-2,6-diaminopimelate from LL-2,6-diaminopimelate: step 1/1. Catalyzes the stereoinversion of LL-2,6-diaminopimelate (L,L-DAP) to meso-diaminopimelate (meso-DAP), a precursor of L-lysine and an essential component of the bacterial peptidoglycan. The polypeptide is Diaminopimelate epimerase (Aliivibrio fischeri (strain ATCC 700601 / ES114) (Vibrio fischeri)).